The sequence spans 325 residues: Acetyl-coenzyme A carboxylase carboxyl transferase subunit alpha (325 aa).

Residues 43–297 (ELENNSTQLR…KTSLIAHLRQ (255 aa)) form the CoA carboxyltransferase C-terminal domain.

It belongs to the AccA family. Acetyl-CoA carboxylase is a heterohexamer composed of biotin carboxyl carrier protein (AccB), biotin carboxylase (AccC) and two subunits each of ACCase subunit alpha (AccA) and ACCase subunit beta (AccD).

It is found in the cytoplasm. The enzyme catalyses N(6)-carboxybiotinyl-L-lysyl-[protein] + acetyl-CoA = N(6)-biotinyl-L-lysyl-[protein] + malonyl-CoA. Its pathway is lipid metabolism; malonyl-CoA biosynthesis; malonyl-CoA from acetyl-CoA: step 1/1. Its function is as follows. Component of the acetyl coenzyme A carboxylase (ACC) complex. First, biotin carboxylase catalyzes the carboxylation of biotin on its carrier protein (BCCP) and then the CO(2) group is transferred by the carboxyltransferase to acetyl-CoA to form malonyl-CoA. This is Acetyl-coenzyme A carboxylase carboxyl transferase subunit alpha from Cyanothece sp. (strain PCC 7425 / ATCC 29141).